Here is a 72-residue protein sequence, read N- to C-terminus: Prokaryotic ubiquitin-like protein Pup (72 aa).

Residues 1–10 (MATKDTGGGQ) show a composition bias toward gly residues. The disordered stretch occupies residues 1–45 (MATKDTGGGQQKATRNTEEVEEQAQDAQASEDLKERQEKLSDDVD). Positions 9 to 60 (GQQKATRNTEEVEEQAQDAQASEDLKERQEKLSDDVDSVLDEIDDVLEENAE) form a coiled coil. The interval 28-66 (QASEDLKERQEKLSDDVDSVLDEIDDVLEENAEDFVRSF) is ARC ATPase binding. Residues 31–42 (EDLKERQEKLSD) show a composition bias toward basic and acidic residues. Glu72 participates in a covalent cross-link: Isoglutamyl lysine isopeptide (Glu-Lys) (interchain with K-? in acceptor proteins).

It belongs to the prokaryotic ubiquitin-like protein family. Strongly interacts with the proteasome-associated ATPase ARC through a hydrophobic interface; the interacting region of Pup lies in its C-terminal half. There is one Pup binding site per ARC hexamer ring.

It participates in protein degradation; proteasomal Pup-dependent pathway. Functionally, protein modifier that is covalently attached to lysine residues of substrate proteins, thereby targeting them for proteasomal degradation. The tagging system is termed pupylation. In Streptomyces avermitilis (strain ATCC 31267 / DSM 46492 / JCM 5070 / NBRC 14893 / NCIMB 12804 / NRRL 8165 / MA-4680), this protein is Prokaryotic ubiquitin-like protein Pup.